The primary structure comprises 69 residues: Lantibiotic lichenicidin A2 (69 aa).

Residues 1-37 (MKNSAAREAFKGANHPAGMVSEEELKALVGGNDVNPE) constitute a propeptide that is removed on maturation. At Thr38 the chain carries 2-oxobutanoic acid. (Z)-2,3-didehydrobutyrine is present on residues Thr39, Thr42, and Thr43. The segment at residues 44 to 48 (SSWTC) is a cross-link (lanthionine (Ser-Cys)). Ser45 is modified (2,3-didehydroalanine (Ser)). (Z)-2,3-didehydrobutyrine occurs at positions 50 and 54. Positions 56 to 60 (SASLC) form a cross-link, lanthionine (Ser-Cys). 2 consecutive cross-links (beta-methyllanthionine (Thr-Cys)) follow at residues 62–65 (TTKC) and 66–69 (TSRC). Residue Thr63 is modified to (Z)-2,3-didehydrobutyrine.

In terms of processing, maturation of lantibiotics involves the enzymatic conversion of Thr, and Ser into dehydrated AA and the formation of thioether bonds with cysteine. This is followed by membrane translocation and cleavage of the modified precursor.

It is found in the secreted. It localises to the cell wall. Lanthionine-containing peptide antibiotic (lantibiotic) active on Gram-positive bacteria. The bactericidal activity of lantibiotics is based on depolarization of energized bacterial cytoplasmic membranes, initiated by the formation of aqueous transmembrane pores. When present individually, LchA2 exhibits activity towards L.lactis HP. When combined with LchA1, it displays activity towards a broad spectrum of non-pathogenic and pathogenic Gram-positive bacteria including strains of L.monocytogenes, methicillin-resistant S.aureus, S.pneumoniae and strains of vancomycin-resistant enterococci, but not towards E.faecium L4001 and BM4147-1. Combined LchA1 and LchA2 peptides also inhibit Bacillus sp. HIL-Y85/54728, L.lactis DPC3417 and B.halodurans C-125, which produce lantibiotics themselves. Inactivated by proteinase K and pronase E, but not by trypsin and chymotrypsin. The polypeptide is Lantibiotic lichenicidin A2 (Bacillus licheniformis (strain ATCC 14580 / DSM 13 / JCM 2505 / CCUG 7422 / NBRC 12200 / NCIMB 9375 / NCTC 10341 / NRRL NRS-1264 / Gibson 46)).